Reading from the N-terminus, the 328-residue chain is Probable nicotianamine synthase 6 (328 aa).

The protein belongs to the nicotianamine synthase (NAS)-like family.

It carries out the reaction 3 S-adenosyl-L-methionine = nicotianamine + 3 S-methyl-5'-thioadenosine + 3 H(+). Its function is as follows. Synthesizes nicotianamine, a polyamine that is the first intermediate in the synthesis of the phytosiderophores of the mugineic acid type found in gramineae which serves as a sensor for the physiological iron status within the plant, and/or might be involved in the transport of iron. In Hordeum vulgare (Barley), this protein is Probable nicotianamine synthase 6 (NAS6).